The following is a 347-amino-acid chain: MQIQLGANLKPYHTFGIEQLAAQLVVAESIDDLKALYCSAEWASLPKLIIGKGSNMLFTCHYTGMVVVNRLNGIEHQQDDDYHRLHVAGGEDWPSLVSWCVEQGIGGLENLALIPGCAGSAPIQNIGAYGVEFKDVCDYVEYLCLETGTVKRLTMEECQFGYRDSIFKHQLYQKAVVTAVGLKFAKAWQPIIQYGPLKDLSSDCAIHDVYQRVCATRMEKLPDPAVMGNAGSFFKNPVISQQAFARLQIEHPDVVAYPAEQGVKVAAGWLIDQAGLKGHQIGGAKVHPKQALVIVNTGDASAQDVLMLAADIQQRVFNCYGIELEHEVRFIGESEETNLKQWMSEQA.

An FAD-binding PCMH-type domain is found at 17–187 (IEQLAAQLVV…TAVGLKFAKA (171 aa)). The active site involves Arg163. Ser232 (proton donor) is an active-site residue. The active site involves Glu327.

The protein belongs to the MurB family. The cofactor is FAD.

The protein localises to the cytoplasm. It carries out the reaction UDP-N-acetyl-alpha-D-muramate + NADP(+) = UDP-N-acetyl-3-O-(1-carboxyvinyl)-alpha-D-glucosamine + NADPH + H(+). Its pathway is cell wall biogenesis; peptidoglycan biosynthesis. Cell wall formation. This Vibrio cholerae serotype O1 (strain ATCC 39541 / Classical Ogawa 395 / O395) protein is UDP-N-acetylenolpyruvoylglucosamine reductase.